The following is a 346-amino-acid chain: Protein phosphatase 1 regulatory subunit 7 (346 aa).

Acidic residues predominate over residues 1-13 (MADEEGETEVQEM). Residues 1–46 (MADEEGETEVQEMEVDRRESDESADDEAKEKPDRVDGGVKNGEVPL) form a disordered region. Residues 14–37 (EVDRRESDESADDEAKEKPDRVDG) show a composition bias toward basic and acidic residues. 11 LRR repeats span residues 63–84 (EAED…EVLK), 85–106 (KVKT…EQLV), 107–128 (TLTE…ETLR), 129–150 (DLQI…ESLS), 151–172 (HLQR…GTLT), 173–194 (QLRL…DSLR), 195–216 (ELDS…ETLT), 217–238 (NLTV…QNLV), 239–260 (NLRE…ENNN), 261–282 (KLTT…KHLS), and 283–304 (ELQE…EELS). Residues 317-346 (NPLQKDAQYRRKIMLALPSVRQIDATFVRF) enclose the LRRCT domain.

This sequence belongs to the SDS22 family.

It is found in the nucleus. In terms of biological role, regulatory subunit of protein phosphatase 1. The sequence is that of Protein phosphatase 1 regulatory subunit 7 (ppp1r7) from Xenopus tropicalis (Western clawed frog).